A 211-amino-acid polypeptide reads, in one-letter code: Thiamine-phosphate synthase (211 aa).

4-amino-2-methyl-5-(diphosphooxymethyl)pyrimidine is bound by residues 37–41 and Asn-69; that span reads QLRIK. Asp-70 and Asp-89 together coordinate Mg(2+). Ser-108 provides a ligand contact to 4-amino-2-methyl-5-(diphosphooxymethyl)pyrimidine. A 2-[(2R,5Z)-2-carboxy-4-methylthiazol-5(2H)-ylidene]ethyl phosphate-binding site is contributed by 134–136; sequence TQT. Lys-137 is a 4-amino-2-methyl-5-(diphosphooxymethyl)pyrimidine binding site. 2-[(2R,5Z)-2-carboxy-4-methylthiazol-5(2H)-ylidene]ethyl phosphate contacts are provided by residues Gly-166 and 186 to 187; that span reads VS.

It belongs to the thiamine-phosphate synthase family. Mg(2+) is required as a cofactor.

The catalysed reaction is 2-[(2R,5Z)-2-carboxy-4-methylthiazol-5(2H)-ylidene]ethyl phosphate + 4-amino-2-methyl-5-(diphosphooxymethyl)pyrimidine + 2 H(+) = thiamine phosphate + CO2 + diphosphate. It carries out the reaction 2-(2-carboxy-4-methylthiazol-5-yl)ethyl phosphate + 4-amino-2-methyl-5-(diphosphooxymethyl)pyrimidine + 2 H(+) = thiamine phosphate + CO2 + diphosphate. The enzyme catalyses 4-methyl-5-(2-phosphooxyethyl)-thiazole + 4-amino-2-methyl-5-(diphosphooxymethyl)pyrimidine + H(+) = thiamine phosphate + diphosphate. The protein operates within cofactor biosynthesis; thiamine diphosphate biosynthesis; thiamine phosphate from 4-amino-2-methyl-5-diphosphomethylpyrimidine and 4-methyl-5-(2-phosphoethyl)-thiazole: step 1/1. Its function is as follows. Condenses 4-methyl-5-(beta-hydroxyethyl)thiazole monophosphate (THZ-P) and 2-methyl-4-amino-5-hydroxymethyl pyrimidine pyrophosphate (HMP-PP) to form thiamine monophosphate (TMP). This Salmonella paratyphi B (strain ATCC BAA-1250 / SPB7) protein is Thiamine-phosphate synthase.